A 317-amino-acid chain; its full sequence is Beta-ketoacyl-[acyl-carrier-protein] synthase III (317 aa).

Active-site residues include Cys112 and His244. The tract at residues 245 to 249 (QANLR) is ACP-binding. Asn274 is an active-site residue.

This sequence belongs to the thiolase-like superfamily. FabH family. Homodimer.

The protein resides in the cytoplasm. The catalysed reaction is malonyl-[ACP] + acetyl-CoA + H(+) = 3-oxobutanoyl-[ACP] + CO2 + CoA. It functions in the pathway lipid metabolism; fatty acid biosynthesis. In terms of biological role, catalyzes the condensation reaction of fatty acid synthesis by the addition to an acyl acceptor of two carbons from malonyl-ACP. Catalyzes the first condensation reaction which initiates fatty acid synthesis and may therefore play a role in governing the total rate of fatty acid production. Possesses both acetoacetyl-ACP synthase and acetyl transacylase activities. Its substrate specificity determines the biosynthesis of branched-chain and/or straight-chain of fatty acids. The polypeptide is Beta-ketoacyl-[acyl-carrier-protein] synthase III (Pectobacterium atrosepticum (strain SCRI 1043 / ATCC BAA-672) (Erwinia carotovora subsp. atroseptica)).